The following is a 309-amino-acid chain: Glutaminase (309 aa).

Substrate contacts are provided by Ser-64, Asn-114, Glu-160, Asn-167, Tyr-191, Tyr-243, and Val-261.

Belongs to the glutaminase family. In terms of assembly, homotetramer.

It carries out the reaction L-glutamine + H2O = L-glutamate + NH4(+). The chain is Glutaminase from Azorhizobium caulinodans (strain ATCC 43989 / DSM 5975 / JCM 20966 / LMG 6465 / NBRC 14845 / NCIMB 13405 / ORS 571).